The chain runs to 1011 residues: Retinoblastoma-related protein (1011 aa).

The segment at 1-22 is disordered; sequence MSQASVDMEDVKPSISLPSDDG. Residues 411-612 form a domain A region; that stretch reads TPVSTAMTTA…ERGSSMYNSL (202 aa). The tract at residues 411–860 is pocket; sequence TPVSTAMTTA…NEVFIPSVKP (450 aa). The spacer stretch occupies residues 613-729; it reads IVARPTLAAE…PAGGGETCAE (117 aa). Positions 730 to 860 are domain B; it reads TGINIFFNKI…NEVFIPSVKP (131 aa). The tract at residues 872–903 is disordered; the sequence is QKSKSSPEDSNNADSQIPGSPRLSPFPNLPDM. Positions 873–889 are enriched in polar residues; it reads KSKSSPEDSNNADSQIP.

This sequence belongs to the retinoblastoma protein (RB) family.

It is found in the nucleus. Functionally, regulator of biological processes that recruits a histone deacetylase to control gene transcription. May play a role in the entry into mitosis, negatively regulating the cell proliferation. Formation of stable complexes with geminiviridae replication-associated proteins may create a cellular environment which favors viral DNA replication. This Cocos nucifera (Coconut palm) protein is Retinoblastoma-related protein (Rb1).